Consider the following 285-residue polypeptide: Nucleotide-binding protein PSPTO_4456 (285 aa).

Position 8–15 (8–15 (GRSGSGKS)) interacts with ATP. A GTP-binding site is contributed by 60–63 (DARN).

The protein belongs to the RapZ-like family.

Displays ATPase and GTPase activities. The chain is Nucleotide-binding protein PSPTO_4456 from Pseudomonas syringae pv. tomato (strain ATCC BAA-871 / DC3000).